The following is an 801-amino-acid chain: Elongation factor G, mitochondrial (801 aa).

A mitochondrion-targeting transit peptide spans 1 to 62; it reads MRTPTLARLP…LSKHFQQRRN (62 aa). In terms of domain architecture, tr-type G spans 99-386; that stretch reads SRVRNIGIAA…GVIDYLPNPS (288 aa). Residues 108–115, 184–188, and 238–241 contribute to the GTP site; these read AHIDSGKT, DTPGH, and NKMD.

It belongs to the TRAFAC class translation factor GTPase superfamily. Classic translation factor GTPase family. EF-G/EF-2 subfamily.

It is found in the mitochondrion. It participates in protein biosynthesis; polypeptide chain elongation. Mitochondrial GTPase that catalyzes the GTP-dependent ribosomal translocation step during translation elongation. During this step, the ribosome changes from the pre-translocational (PRE) to the post-translocational (POST) state as the newly formed A-site-bound peptidyl-tRNA and P-site-bound deacylated tRNA move to the P and E sites, respectively. Catalyzes the coordinated movement of the two tRNA molecules, the mRNA and conformational changes in the ribosome. This is Elongation factor G, mitochondrial (mef1) from Aspergillus niger (strain ATCC MYA-4892 / CBS 513.88 / FGSC A1513).